A 367-amino-acid polypeptide reads, in one-letter code: Heparan sulfate glucosamine 3-O-sulfotransferase 2 (367 aa).

The Cytoplasmic portion of the chain corresponds to 1–19; it reads MAYRVLGRAGPPQPRRARR. A helical; Signal-anchor for type II membrane protein transmembrane segment spans residues 20–39; sequence LLFAFTLSLSCTYLCYSFLC. The Lumenal segment spans residues 40 to 367; that stretch reads CCDDLGRSRL…ETVGQDFRWE (328 aa). The interval 61-110 is disordered; it reads AGGQKLLQKSRPCDPSGPTPSEPSAPSAPAAAVPAPRLSGSNHSGSPKLG. Low complexity predominate over residues 84 to 96; it reads SAPSAPAAAVPAP. Residue N102 is glycosylated (N-linked (GlcNAc...) asparagine). 124–128 contacts 3'-phosphoadenylyl sulfate; it reads KGGTR. Substrate is bound by residues 146 to 152 and 177 to 180; these read EPHFFDR and KTPS. The N-linked (GlcNAc...) asparagine glycan is linked to N193. The 3'-phosphoadenylyl sulfate site is built by R205 and S213. An N-linked (GlcNAc...) asparagine glycan is attached at N235. 245 to 246 is a binding site for substrate; the sequence is WN. N306 carries N-linked (GlcNAc...) asparagine glycosylation. Cysteines 313 and 325 form a disulfide. Residue 330 to 334 participates in 3'-phosphoadenylyl sulfate binding; the sequence is KGRTH.

Belongs to the sulfotransferase 1 family. Highly expressed in the brain and weakly expressed in the heart, placenta, lung and skeletal muscle.

It localises to the golgi apparatus membrane. The enzyme catalyses alpha-D-glucosaminyl-[heparan sulfate](n) + 3'-phosphoadenylyl sulfate = 3-sulfo-alpha-D-glucosaminyl-[heparan sulfate](n) + adenosine 3',5'-bisphosphate + H(+). In terms of biological role, sulfotransferase that utilizes 3'-phospho-5'-adenylyl sulfate (PAPS) to catalyze the transfer of a sulfo group to an N-unsubstituted glucosamine linked to a 2-O-sulfo iduronic acid unit on heparan sulfate. Catalyzes the O-sulfation of glucosamine in GlcA2S-GlcNS. Unlike HS3ST1/3-OST-1, does not convert non-anticoagulant heparan sulfate to anticoagulant heparan sulfate. This Homo sapiens (Human) protein is Heparan sulfate glucosamine 3-O-sulfotransferase 2 (HS3ST2).